We begin with the raw amino-acid sequence, 401 residues long: Nicotinate phosphoribosyltransferase (401 aa).

Residue His221 is modified to Phosphohistidine; by autocatalysis.

This sequence belongs to the NAPRTase family. Transiently phosphorylated on a His residue during the reaction cycle. Phosphorylation strongly increases the affinity for substrates and increases the rate of nicotinate D-ribonucleotide production. Dephosphorylation regenerates the low-affinity form of the enzyme, leading to product release.

It carries out the reaction nicotinate + 5-phospho-alpha-D-ribose 1-diphosphate + ATP + H2O = nicotinate beta-D-ribonucleotide + ADP + phosphate + diphosphate. It functions in the pathway cofactor biosynthesis; NAD(+) biosynthesis; nicotinate D-ribonucleotide from nicotinate: step 1/1. In terms of biological role, catalyzes the synthesis of beta-nicotinate D-ribonucleotide from nicotinate and 5-phospho-D-ribose 1-phosphate at the expense of ATP. The chain is Nicotinate phosphoribosyltransferase from Pectobacterium carotovorum subsp. carotovorum (strain PC1).